A 215-amino-acid chain; its full sequence is Glycerol-3-phosphate acyltransferase (215 aa).

5 helical membrane-spanning segments follow: residues 14–34 (SSSALIVLAYLIGSIPFAVVV), 63–83 (TAAALTLLGDAAKGWFALWLA), 92–112 (WGAYALVALAVFLGHLYPLFL), 128–148 (MAIEPWLAVATIATWLIVAVF), and 154–174 (LAALVAAFFAPVYYVFGSGAA).

The protein belongs to the PlsY family. As to quaternary structure, probably interacts with PlsX.

It is found in the cell inner membrane. It catalyses the reaction an acyl phosphate + sn-glycerol 3-phosphate = a 1-acyl-sn-glycero-3-phosphate + phosphate. It functions in the pathway lipid metabolism; phospholipid metabolism. In terms of biological role, catalyzes the transfer of an acyl group from acyl-phosphate (acyl-PO(4)) to glycerol-3-phosphate (G3P) to form lysophosphatidic acid (LPA). This enzyme utilizes acyl-phosphate as fatty acyl donor, but not acyl-CoA or acyl-ACP. In Bordetella bronchiseptica (strain ATCC BAA-588 / NCTC 13252 / RB50) (Alcaligenes bronchisepticus), this protein is Glycerol-3-phosphate acyltransferase.